The following is a 106-amino-acid chain: ATP-dependent Clp protease adapter protein ClpS (106 aa).

It belongs to the ClpS family. As to quaternary structure, binds to the N-terminal domain of the chaperone ClpA.

Involved in the modulation of the specificity of the ClpAP-mediated ATP-dependent protein degradation. This Escherichia coli O127:H6 (strain E2348/69 / EPEC) protein is ATP-dependent Clp protease adapter protein ClpS.